We begin with the raw amino-acid sequence, 599 residues long: MNNPLVNQAAMVLPVFLLSACLGGGGSFDLDSVETVQDMHSKPKYEDEKSQPESQQDVSENSGAAYGFAVKLPRRNAHFNPKYKEKHKPLGSMDWKKLQRGEPNSFSERDELEKKRGSSELIESKWEDGQSRVVGYTNFTYVRSGYVYLNKNNIDIKNNIVLFGPDGYLYYKGKEPSKELPSEKITYKGTWDYVTDAMEKQRFEGLGSAAGGDKSGALSALEEGVLRNQAEASSGHTDFGMTSEFEVDFSDKTIKGTLYRNNRITQNNSENKQIKTTRYTIQATLHGNRFKGKALAADKGATNGSHPFISDSDSLEGGFYGPKGEELAGKFLSNDNKVAAVFGAKQKDKKDGENAAGPATETVIDAYRITGEEFKKEQIDSFGDVKKLLVDGVELSLLPSEGNKAAFQHEIEQNGVKATVCCSNLDYMSFGKLSKENKDDMFLQGVRTPVSDVAARTEANAKYRGTWYGYIANGTSWSGEASNQEGGNRAEFDVDFSTKKISGTLTAKDRTSPAFTITAMIKDNGFSGVAKTGENGFALDPQNTGNSHYTHIEATVSGGFYGKNAIEMGGSFSFPGNAPEGKQEKASVVFGAKRQQLVQ.

An N-terminal signal peptide occupies residues 1 to 20; it reads MNNPLVNQAAMVLPVFLLSA. Cysteine 21 is lipidated: N-palmitoyl cysteine. Cysteine 21 carries the S-diacylglycerol cysteine lipid modification. Residues 39–51 show a composition bias toward basic and acidic residues; it reads MHSKPKYEDEKSQ. 2 disordered regions span residues 39–61 and 80–119; these read MHSKPKYEDEKSQPESQQDVSEN and NPKYKEKHKPLGSMDWKKLQRGEPNSFSERDELEKKRGSS. Residues 52–61 show a composition bias toward polar residues; the sequence is PESQQDVSEN. A compositionally biased stretch (basic and acidic residues) spans 107–119; sequence SERDELEKKRGSS.

This sequence belongs to the TbpB family. Isotype I subfamily. In terms of assembly, binds only human holo-transferrin (TF), via the TF C-terminus. Forms a large complex with TF and TbpA. Interacts via its C-terminal domain with Slam1.

It localises to the cell outer membrane. The protein localises to the cell surface. Neisseria acquires iron by extracting it from serum transferrin (TF) in its human host. Acts as a TF receptor and is required for TF utilization. Involved in the initial capture of TF. Helps select only those TF molecules that can be used as an iron source and concentrates them on the cell surface, maintaining the iron-loaded status of the TF C-terminal lobe until its delivery to TbpA. This chain is Transferrin-binding protein B (tbpB), found in Neisseria meningitidis serogroup B.